Reading from the N-terminus, the 350-residue chain is Casein kinase II subunit alpha' (350 aa).

Tyr13 is modified (phosphotyrosine). A phosphoserine mark is found at Ser18 and Ser21. Residues 40–325 form the Protein kinase domain; that stretch reads YQLVRKLGRG…AKEAMEHPYF (286 aa). ATP contacts are provided by residues 46-54 and Lys69; that span reads LGRGKYSEV. Lys97 carries the N6-acetyllysine modification. Asp157 serves as the catalytic Proton acceptor. Position 288 is a phosphoserine (Ser288).

It belongs to the protein kinase superfamily. Ser/Thr protein kinase family. CK2 subfamily. Heterotetramer composed of two catalytic subunits (alpha chain and/or alpha' chain) and two regulatory subunits (beta chains). The tetramer can exist as a combination of 2 alpha/2 beta, 2 alpha'/2 beta or 1 alpha/1 alpha'/2 beta subunits. Also part of a CK2-SPT16-SSRP1 complex composed of SSRP1, SUPT16H, CSNK2A1, CSNK2A2 and CSNK2B, which forms following UV irradiation. Interacts with RNPS1. Interacts with CSNK2A2IP (via C-terminus). Interacts with SIRT6; preventing CSNK2A2 localization to the nucleus. Interacts with HIRIP3. As to expression, highly expressed in brain, testis and mature epididymal spermatozoa. Weakly expressed in kidney, liver, lung, spleen and thymus (at protein level).

The protein localises to the nucleus. It localises to the cytoplasm. It carries out the reaction L-seryl-[protein] + ATP = O-phospho-L-seryl-[protein] + ADP + H(+). It catalyses the reaction L-threonyl-[protein] + ATP = O-phospho-L-threonyl-[protein] + ADP + H(+). Constitutively active protein kinase whose activity is not directly affected by phosphorylation. Seems to be regulated by level of expression and localization. Its function is as follows. Catalytic subunit of a constitutively active serine/threonine-protein kinase complex that phosphorylates a large number of substrates containing acidic residues C-terminal to the phosphorylated serine or threonine. Regulates numerous cellular processes, such as cell cycle progression, apoptosis and transcription, as well as viral infection. May act as a regulatory node which integrates and coordinates numerous signals leading to an appropriate cellular response. During mitosis, functions as a component of the p53/TP53-dependent spindle assembly checkpoint (SAC) that maintains cyclin-B-CDK1 activity and G2 arrest in response to spindle damage. Also required for p53/TP53-mediated apoptosis, phosphorylating 'Ser-392' of p53/TP53 following UV irradiation. Phosphorylates a number of DNA repair proteins in response to DNA damage, such as MDC1, RAD9A, RAD51 and HTATSF1, promoting their recruitment to DNA damage sites. Can also negatively regulate apoptosis. Phosphorylates the caspases CASP9 and CASP2 and the apoptotic regulator NOL3. Phosphorylation protects CASP9 from cleavage and activation by CASP8, and inhibits the dimerization of CASP2 and activation of CASP8. Regulates transcription by direct phosphorylation of RNA polymerases I, II, III and IV. Also phosphorylates and regulates numerous transcription factors including NF-kappa-B, STAT1, CREB1, IRF1, IRF2, ATF1, SRF, MAX, JUN, FOS, MYC and MYB. Phosphorylates Hsp90 and its co-chaperones FKBP4 and CDC37, which is essential for chaperone function. Regulates Wnt signaling by phosphorylating CTNNB1 and the transcription factor LEF1. Acts as an ectokinase that phosphorylates several extracellular proteins. May phosphorylate histone H2A on 'Ser-1'. This chain is Casein kinase II subunit alpha' (Csnk2a2), found in Mus musculus (Mouse).